We begin with the raw amino-acid sequence, 146 residues long: UPF0178 protein BAMEG_1545 (146 aa).

This sequence belongs to the UPF0178 family.

In Bacillus anthracis (strain CDC 684 / NRRL 3495), this protein is UPF0178 protein BAMEG_1545.